Reading from the N-terminus, the 125-residue chain is Holo-[acyl-carrier-protein] synthase (125 aa).

Mg(2+)-binding residues include Asp-8 and Glu-56.

It belongs to the P-Pant transferase superfamily. AcpS family. The cofactor is Mg(2+).

It localises to the cytoplasm. It catalyses the reaction apo-[ACP] + CoA = holo-[ACP] + adenosine 3',5'-bisphosphate + H(+). In terms of biological role, transfers the 4'-phosphopantetheine moiety from coenzyme A to a Ser of acyl-carrier-protein. This Borrelia hermsii (strain HS1 / DAH) protein is Holo-[acyl-carrier-protein] synthase.